The following is a 446-amino-acid chain: Probable D-serine dehydratase (446 aa).

Lys116 is modified (N6-(pyridoxal phosphate)lysine).

This sequence belongs to the serine/threonine dehydratase family. DsdA subfamily. It depends on pyridoxal 5'-phosphate as a cofactor.

It catalyses the reaction D-serine = pyruvate + NH4(+). The chain is Probable D-serine dehydratase from Bacillus cereus (strain 03BB102).